The sequence spans 629 residues: tRNA uridine 5-carboxymethylaminomethyl modification enzyme MnmG (629 aa).

FAD contacts are provided by residues glycine 14–glycine 19, valine 126, and serine 181. Glycine 273 to phenylalanine 287 lines the NAD(+) pocket. Glutamine 370 is a binding site for FAD.

This sequence belongs to the MnmG family. As to quaternary structure, homodimer. Heterotetramer of two MnmE and two MnmG subunits. FAD serves as cofactor.

The protein localises to the cytoplasm. Its function is as follows. NAD-binding protein involved in the addition of a carboxymethylaminomethyl (cmnm) group at the wobble position (U34) of certain tRNAs, forming tRNA-cmnm(5)s(2)U34. In Bacillus cereus (strain ATCC 10987 / NRS 248), this protein is tRNA uridine 5-carboxymethylaminomethyl modification enzyme MnmG.